We begin with the raw amino-acid sequence, 568 residues long: TWiK family of potassium channels protein 9 (568 aa).

Residues 1-15 lie on the Cytoplasmic side of the membrane; sequence MKCSFHIPEKYQWAS. Residues 16–36 traverse the membrane as a helical segment; it reads TLFVHVALIAGVAVYTVFGAL. Residues 163–183 constitute an intramembrane region (pore-forming); sequence IGNSVIFAFTVITTIGYGHVA. Residues 191–211 traverse the membrane as a helical segment; it reads LFLIFYGVIGVPFTLLTIADL. Residues 212–316 lie on the Cytoplasmic side of the membrane; it reads GMFLTRFLKN…NNEPRKTEES (105 aa). Disordered regions lie at residues 243 to 262 and 274 to 314; these read QRNK…RSEV and MRTA…RKTE. The span at 297-307 shows a compositional bias: acidic residues; that stretch reads GKEEDEEEPEN. The chain crosses the membrane as a helical span at residues 317–337; that stretch reads IALGITFTCYLVAGAKILSVY. Residues 343-363 constitute an intramembrane region (pore-forming); the sequence is FFKALYFNFVTLTTIGLGDFV. A helical transmembrane segment spans residues 370–390; it reads LLITLIYIGIGLALTTMAIEI. The Cytoplasmic portion of the chain corresponds to 391–568; that stretch reads AADLLKKLHY…LRTYTNARRK (178 aa).

This sequence belongs to the two pore domain potassium channel (TC 1.A.1.8) family. In terms of tissue distribution, expressed in ray A-type neurons and cell bodies. Also seen in head, pharyngeal and phasmid neurons, and in coelomocytes.

The protein resides in the membrane. Functionally, potassium channel protein that may be component of regulatory network that controls ray development and function. The chain is TWiK family of potassium channels protein 9 (twk-9) from Caenorhabditis elegans.